A 489-amino-acid chain; its full sequence is Probable apyrase 1 (489 aa).

The Cytoplasmic segment spans residues 1 to 28; the sequence is MRRFSAAAGARQQQQQGEAVSDRVLRFR. Residues 29–49 form a helical; Signal-anchor for type II membrane protein membrane-spanning segment; sequence GVLVVVLAPVLLISLVLLLMP. The Extracellular portion of the chain corresponds to 50-489; sequence RAPASATVEG…GSAIEVASSS (440 aa). ATP is bound at residue 89 to 99; the sequence is VIFDAGSSGSR. The Proton acceptor role is filled by E211. ATP is bound at residue 235-245; the sequence is GVVDLGGGSVQ.

This sequence belongs to the GDA1/CD39 NTPase family. The cofactor is Ca(2+).

It localises to the membrane. The catalysed reaction is a ribonucleoside 5'-triphosphate + 2 H2O = a ribonucleoside 5'-phosphate + 2 phosphate + 2 H(+). Catalyzes the hydrolysis of phosphoanhydride bonds of nucleoside tri- and di-phosphates. The chain is Probable apyrase 1 (APY1) from Oryza sativa subsp. japonica (Rice).